Here is a 660-residue protein sequence, read N- to C-terminus: Protein translocase subunit SecA 2 (660 aa).

Residues glutamine 113, 131 to 135 (GEGKT), and aspartate 539 each bind ATP.

Belongs to the SecA family. Monomer and homodimer. Part of the essential Sec protein translocation apparatus which comprises SecA, SecYEG and auxiliary proteins SecDF-YajC and YidC.

It localises to the cell inner membrane. The protein localises to the cytoplasm. It carries out the reaction ATP + H2O + cellular proteinSide 1 = ADP + phosphate + cellular proteinSide 2.. Functionally, part of the Sec protein translocase complex. Interacts with the SecYEG preprotein conducting channel. Has a central role in coupling the hydrolysis of ATP to the transfer of proteins into and across the cell membrane, serving both as a receptor for the preprotein-SecB complex and as an ATP-driven molecular motor driving the stepwise translocation of polypeptide chains across the membrane. The protein is Protein translocase subunit SecA 2 of Bordetella avium (strain 197N).